We begin with the raw amino-acid sequence, 81 residues long: UPF0248 protein TK0315 (81 aa).

Belongs to the UPF0248 family.

This is UPF0248 protein TK0315 from Thermococcus kodakarensis (strain ATCC BAA-918 / JCM 12380 / KOD1) (Pyrococcus kodakaraensis (strain KOD1)).